A 523-amino-acid chain; its full sequence is L-tyrosine:2-oxoglutarate aminotransferase ucdG (523 aa).

The protein belongs to the class-I pyridoxal-phosphate-dependent aminotransferase family. Homodimer. It depends on pyridoxal 5'-phosphate as a cofactor.

The protein localises to the cytoplasm. The enzyme catalyses L-tyrosine + 2-oxoglutarate = 3-(4-hydroxyphenyl)pyruvate + L-glutamate. It participates in secondary metabolite biosynthesis. Nonribosomal peptide synthetase that mediates the biosynthesis of usterphenyllins and uscandidusins, p-terphenyl derivatives. Within the pathway, ucdG is probably involved in the conversion of L-tyrosine into 4-hydroxyphenylpyruvate (HPPA) as a precursor for the usterphenyllin and uscandidusin biosynthesis. UcdE further prenylates position C-14 of ring C of usterphenyllin B to form usterphenyllin A. The pathway begin with the biosynthesis of 4-hydroxyphenylpyruvate (HPPA) from L-tyrosine, possibly by the aminotransferase ucdG. The nonribosomal peptide synthetase ucdA then condenses two HPPA units to produce atromentin. The key step in this pathway is the reduction and dehydration of atromentin to form a terphenyl triol intermediate, performed by the NAD-dependent dehydrogenase ucdB. Further O-methylation by the methyltransferase ucdC forms terphenyllin carrying two methoxy moieties at C-9 and C-12, and subsequent dihydroxylation at C-3 of ring A and C-15 of ring C by the flavin-dependent oxygenase ucdD leads to 3,15-dihydroxyterphenyllin. Prenylation by ucdE at position C-5 of ring A forms usterphenyllin B, and is followed by a second prenylation at position C-14 of ring C to form usterphenyllin A. The following furan ring formation that leads to uscandidusins A and B was proven to be an unexpected spontaneous non-enzymatic reaction. In Aspergillus ustus, this protein is L-tyrosine:2-oxoglutarate aminotransferase ucdG.